A 317-amino-acid chain; its full sequence is Actin-related protein 2/3 complex subunit 2 (317 aa).

Belongs to the ARPC2 family. Component of the Arp2/3 complex composed of arp2, act2, arc1/p41-ARC, arc2/p34-ARC, arc3/p21-ARC, arc4/p20-ARC and arc5/p16-ARC.

It localises to the cytoplasm. The protein resides in the cytoskeleton. The protein localises to the actin patch. Functions as actin-binding component of the Arp2/3 complex which is involved in regulation of actin polymerization and together with an activating nucleation-promoting factor (NPF) mediates the formation of branched actin networks. Seems to contact the mother actin filament. The chain is Actin-related protein 2/3 complex subunit 2 (arc2) from Schizosaccharomyces pombe (strain 972 / ATCC 24843) (Fission yeast).